Reading from the N-terminus, the 419-residue chain is Synaptosomal-associated protein 47 (419 aa).

T-SNARE coiled-coil homology domains are found at residues 108 to 170 (PQGA…LSEL) and 356 to 418 (VLQP…MRKL).

This sequence belongs to the SVAP1 family.

Functionally, may play a role in intracellular membrane fusion. The protein is Synaptosomal-associated protein 47 (snap47) of Danio rerio (Zebrafish).